Here is a 109-residue protein sequence, read N- to C-terminus: Large ribosomal subunit protein uL22 (109 aa).

Belongs to the universal ribosomal protein uL22 family. As to quaternary structure, part of the 50S ribosomal subunit.

In terms of biological role, this protein binds specifically to 23S rRNA; its binding is stimulated by other ribosomal proteins, e.g. L4, L17, and L20. It is important during the early stages of 50S assembly. It makes multiple contacts with different domains of the 23S rRNA in the assembled 50S subunit and ribosome. The globular domain of the protein is located near the polypeptide exit tunnel on the outside of the subunit, while an extended beta-hairpin is found that lines the wall of the exit tunnel in the center of the 70S ribosome. This chain is Large ribosomal subunit protein uL22, found in Aromatoleum aromaticum (strain DSM 19018 / LMG 30748 / EbN1) (Azoarcus sp. (strain EbN1)).